Here is a 262-residue protein sequence, read N- to C-terminus: Phosphonates import ATP-binding protein PhnC (262 aa).

The region spanning 5 to 253 (IRVEKLAKTF…RFDHLYRSIN (249 aa)) is the ABC transporter domain. Residue 37 to 44 (GPSGSGKS) participates in ATP binding.

The protein belongs to the ABC transporter superfamily. Phosphonates importer (TC 3.A.1.9.1) family. As to quaternary structure, the complex is composed of two ATP-binding proteins (PhnC), two transmembrane proteins (PhnE) and a solute-binding protein (PhnD).

The protein resides in the cell inner membrane. The catalysed reaction is phosphonate(out) + ATP + H2O = phosphonate(in) + ADP + phosphate + H(+). Its function is as follows. Part of the ABC transporter complex PhnCDE involved in phosphonates import. Responsible for energy coupling to the transport system. The protein is Phosphonates import ATP-binding protein PhnC of Shigella boydii serotype 4 (strain Sb227).